The following is a 409-amino-acid chain: Torsin-4A (409 aa).

Over residues 1–16 the composition is skewed to basic and acidic residues; sequence MGEQDPSDRLRGDQLK. 2 disordered regions span residues 1-28 and 75-99; these read MGEQ…SFSQ and DNLH…KGRV. Residues 17-28 are compositionally biased toward polar residues; it reads EPNQNGKGSFSQ. Over residues 88 to 98 the composition is skewed to basic residues; sequence PRKRKKKRKGR. Residues 120–136 form a helical membrane-spanning segment; sequence CLYLLCIIVFLQVYNAI. ATP is bound at residue 192 to 199; it reads GPTGVGKS.

It belongs to the ClpA/ClpB family. Torsin subfamily.

The protein resides in the membrane. The protein is Torsin-4A (tor4a) of Danio rerio (Zebrafish).